The following is a 1233-amino-acid chain: Anion exchange protein 3 (1233 aa).

A compositionally biased stretch (pro residues) spans 1–11; the sequence is MANGVIPPPGG. 2 disordered regions span residues 1 to 320 and 431 to 500; these read MANG…RRPH and DDKD…DGHR. Over 1–709 the chain is Cytoplasmic; sequence MANGVIPPPG…DLRDALHSQC (709 aa). Over residues 58 to 73 the composition is skewed to basic and acidic residues; sequence DPEKPSRSFSERDFAF. Basic residues-rich tracts occupy residues 74 to 97 and 104 to 113; these read HRHISHHTHHPLSARLPPPHKLRR and RHTRRKRKKE. A compositionally biased stretch (acidic residues) spans 137 to 153; the sequence is GEEEEEEEEEGESETEA. 4 positions are modified to phosphoserine: Ser-168, Ser-171, Ser-176, and Ser-199. Over residues 201 to 216 the composition is skewed to low complexity; sequence QRSVSSSSPRARAPRV. Residues 268 to 290 show a composition bias toward basic and acidic residues; the sequence is DDMKSHRLEDNPGVRRHLVKEPS. Arg-296 carries the omega-N-methylarginine modification. The span at 437 to 450 shows a compositional bias: low complexity; the sequence is SFPRNPSSSSVNSV. The segment covering 482 to 500 has biased composition (basic and acidic residues); the sequence is HDPDAKERPLHMPGGDGHR. A run of 4 helical transmembrane segments spans residues 710–732, 738–775, 795–817, and 827–848; these read VAAVLFIYFAALSPAITFGGLLG, LMGVSELIVSTAVLGVLFSLLGAQPLLVVGFSGPLLVF, VWVGLWLVVFVLALVGAEGTFLV, and IFAFLISLIFIYETFHKLYKVF. The tract at residues 710–1233 is membrane (anion exchange); the sequence is VAAVLFIYFA…DEYNELHMPV (524 aa). N-linked (GlcNAc...) asparagine glycosylation is present at Asn-874. The helical transmembrane segment at 894–911 threads the bilayer; sequence ALLSLILMLGTFLIAFFL. Over 912–926 the chain is Cytoplasmic; sequence RKFRNSRFLGGKARR. A run of 5 helical transmembrane segments spans residues 927–947, 981–1003, 1029–1050, 1084–1129, and 1156–1192; these read IIGDFGIPISILLMVLVDYSI, PFPPWMMVAAAVPALLVLILIFM, LLLIGSLGGLCGLFGLPWLTAA, VTGV…IQLS, and MHLFTCIQLACIALLWVVKSTAASLAFPFLLLLTVPL. Cys-1166 carries S-palmitoyl cysteine lipidation.

Belongs to the anion exchanger (TC 2.A.31) family.

Its subcellular location is the cell membrane. It carries out the reaction hydrogencarbonate(in) + chloride(out) = hydrogencarbonate(out) + chloride(in). In terms of biological role, sodium-independent anion exchanger which mediates the electroneutral exchange of chloride for bicarbonate ions across the cell membrane. May be involved in the regulation of intracellular pH, and the modulation of cardiac action potential. In Oryctolagus cuniculus (Rabbit), this protein is Anion exchange protein 3 (SLC4A3).